Consider the following 333-residue polypeptide: Ferredoxin--NADP reductase (333 aa).

Asp32, Gln40, Tyr45, Ala85, Phe119, Asp285, and Thr326 together coordinate FAD.

The protein belongs to the ferredoxin--NADP reductase type 2 family. Homodimer. FAD is required as a cofactor.

It carries out the reaction 2 reduced [2Fe-2S]-[ferredoxin] + NADP(+) + H(+) = 2 oxidized [2Fe-2S]-[ferredoxin] + NADPH. The chain is Ferredoxin--NADP reductase from Neorickettsia sennetsu (strain ATCC VR-367 / Miyayama) (Ehrlichia sennetsu).